The following is a 90-amino-acid chain: Putative antitoxin VapB8 (90 aa).

The disordered stretch occupies residues 1–56 (MEKSRCHAVAHGGGCAGSAKSHKSGGRCGQGRGAGDSHGTRGAGRRYRAASAPHPL). Positions 26–36 (GRCGQGRGAGD) are enriched in gly residues.

Antitoxin component of a possible type II toxin-antitoxin (TA) system. The cognate toxin is VapC8. This chain is Putative antitoxin VapB8 (vapB8), found in Mycobacterium tuberculosis (strain ATCC 25618 / H37Rv).